The following is a 483-amino-acid chain: Aspartyl/glutamyl-tRNA(Asn/Gln) amidotransferase subunit B (483 aa).

It belongs to the GatB/GatE family. GatB subfamily. In terms of assembly, heterotrimer of A, B and C subunits.

It carries out the reaction L-glutamyl-tRNA(Gln) + L-glutamine + ATP + H2O = L-glutaminyl-tRNA(Gln) + L-glutamate + ADP + phosphate + H(+). The catalysed reaction is L-aspartyl-tRNA(Asn) + L-glutamine + ATP + H2O = L-asparaginyl-tRNA(Asn) + L-glutamate + ADP + phosphate + 2 H(+). In terms of biological role, allows the formation of correctly charged Asn-tRNA(Asn) or Gln-tRNA(Gln) through the transamidation of misacylated Asp-tRNA(Asn) or Glu-tRNA(Gln) in organisms which lack either or both of asparaginyl-tRNA or glutaminyl-tRNA synthetases. The reaction takes place in the presence of glutamine and ATP through an activated phospho-Asp-tRNA(Asn) or phospho-Glu-tRNA(Gln). The chain is Aspartyl/glutamyl-tRNA(Asn/Gln) amidotransferase subunit B from Rickettsia africae (strain ESF-5).